We begin with the raw amino-acid sequence, 339 residues long: MKPYPIDLVSVVIPVYNEEASLPELLRRTEAACLELGRAFEIVLVDDGSRDRSAELLQAAAERDGSAVVAVILNRNYGQHAAILAGFEQSRGDLVITLDADLQNPPEEIPRLVERAAQGYDVVGSIRAERQDSAWRRWPSRLVNLAVQRSTGVAMHDYGCMLRAYRRSIVEAMLACRERSTFIPILANGFARHTCEIRVAHAERAHGESKYSAMRLLNLMFDLVTCMTTTPLRLLSLVGGGMALAGFLFALFLLVLRLAFGAAWAGNGLFVLFAVLFMFSGVQLLGMGLLGEYLGRMYSDVRARPRFFIERVVRATPSALPSALQRVGFTSSSSEPSTP.

Transmembrane regions (helical) follow at residues 235-255 (LSLVGGGMALAGFLFALFLLV) and 269-289 (LFVLFAVLFMFSGVQLLGMGL).

This sequence belongs to the glycosyltransferase 2 family.

It localises to the cell inner membrane. The catalysed reaction is UDP-4-deoxy-4-formamido-beta-L-arabinose + di-trans,octa-cis-undecaprenyl phosphate = 4-deoxy-4-formamido-alpha-L-arabinopyranosyl di-trans,octa-cis-undecaprenyl phosphate + UDP. Its pathway is glycolipid biosynthesis; 4-amino-4-deoxy-alpha-L-arabinose undecaprenyl phosphate biosynthesis; 4-amino-4-deoxy-alpha-L-arabinose undecaprenyl phosphate from UDP-4-deoxy-4-formamido-beta-L-arabinose and undecaprenyl phosphate: step 1/2. The protein operates within bacterial outer membrane biogenesis; lipopolysaccharide biosynthesis. Functionally, catalyzes the transfer of 4-deoxy-4-formamido-L-arabinose from UDP to undecaprenyl phosphate. The modified arabinose is attached to lipid A and is required for resistance to polymyxin and cationic antimicrobial peptides. This chain is Undecaprenyl-phosphate 4-deoxy-4-formamido-L-arabinose transferase, found in Pseudomonas aeruginosa (strain UCBPP-PA14).